A 466-amino-acid polypeptide reads, in one-letter code: Replicative helicase loading/DNA remodeling protein DnaB (466 aa).

The segment at Arg3–Gln113 is DDBH1. Residues Glu200–Glu292 are DDBH2-1. The tract at residues Val293–Asn401 is DDBH2-2.

Belongs to the DnaB/DnaD family. As to quaternary structure, homotetramer, higher-order oligomers are induced by ssDNA. The DNA replisome assembles sequentially on oriC in this order; DnaA, DnaD, DnaB, DnaI-DnaC helicase. Part of the replication restart primosome, PriA binds first, then DnaD and subsequently DnaB bind.

Functionally, helps DnaI load the DnaC replicative helicase onto single-stranded (ss)DNA. During DNA replication from the origin of replication (oriC) in the DNA replisome, DnaB and DnaD are required after DnaA and before subsequent helicase DnaC loading. Component of the replication restart primosome, which reloads the replicative helicase on sites other than oriC. Essential for replication initiation of the chromosome and plasmids. Remodels DNA, laterally compacts supercoiled plasmid and linear DNA. Binds supercoiled, nicked and linear double-stranded (ds)DNA and phage phiX174 single-stranded (ss)DNA; phiX174 ssDNA is a better substrate than for B.subtilis. No binding to phage M13 ssDNA although it induces oligomers. The chain is Replicative helicase loading/DNA remodeling protein DnaB from Staphylococcus aureus (strain NCTC 8325 / PS 47).